A 33-amino-acid polypeptide reads, in one-letter code: Ice-structuring protein GS-5 (33 aa).

At M1 the chain carries Blocked amino end (Met).

The protein belongs to the type-I AFP family.

Functionally, antifreeze proteins lower the blood freezing point. This chain is Ice-structuring protein GS-5, found in Myoxocephalus aenaeus (Grubby sculpin).